The primary structure comprises 166 residues: Protein-export protein SecB (166 aa).

The protein belongs to the SecB family. Homotetramer, a dimer of dimers. One homotetramer interacts with 1 SecA dimer.

It is found in the cytoplasm. Functionally, one of the proteins required for the normal export of preproteins out of the cell cytoplasm. It is a molecular chaperone that binds to a subset of precursor proteins, maintaining them in a translocation-competent state. It also specifically binds to its receptor SecA. This chain is Protein-export protein SecB, found in Actinobacillus pleuropneumoniae serotype 7 (strain AP76).